An 804-amino-acid polypeptide reads, in one-letter code: Tegument protein UL47 homolog (804 aa).

The span at 1-15 (MQSGHYNRRQSRRQR) shows a compositional bias: basic residues. Disordered stretches follow at residues 1-42 (MQSG…THPP) and 58-206 (LNSE…DYFS). Positions 11–31 (SRRQRISSNTTDSPRHTHGTR) match the Nuclear localization signal motif. Polar residues predominate over residues 32 to 42 (YRSTNWYTHPP). Acidic residues predominate over residues 62–72 (MDQDSSSDASD). Residues 82–93 (STYNGSEQNTST) show a composition bias toward polar residues. A compositionally biased stretch (basic and acidic residues) spans 94-109 (SRHENRIFKLTEREAN). 3 repeat units span residues 117-132 (DAID…EAEE), 133-148 (DAID…EAEE), and 149-164 (DAID…EAEE). The tract at residues 117-203 (DAIDDEGEAE…IDDEGEAEED (87 aa)) is 6 X 16 AA approximate tandem repeats. The span at 118-204 (AIDDEGEAEE…DDEGEAEEDY (87 aa)) shows a compositional bias: acidic residues. Residues 170–180 (DAIDDEGEAEE) form a 1-4; truncated repeat. The stretch at 181–191 (DAIDDEGEAEE) is one 1-5; truncated repeat. The 1-6; truncated repeat unit spans residues 192–203 (DAIDDEGEAEED). The Nuclear export signal signature appears at 770 to 792 (QPIPSVDLAENLMQYRNEILGLD).

This sequence belongs to the alphaherpesvirinae HHV-1 UL47 family. As to quaternary structure, interacts with US3 kinase. Interacts with ORF24 and ORF27; these interactions seem important for efficient virion nuclear egress. Interacts with ORF17/VHS. In terms of processing, phosphorylated by US3. This phosphorylation is required for proper nuclear localization.

It is found in the virion tegument. It localises to the host nucleus. The protein localises to the host cytoplasm. Tegument protein that can bind to various RNA transcripts. Plays a role in the attenuation of selective viral and cellular mRNA degradation by modulating the activity of host shutoff RNase ORF17/VHS. Also plays a role in the primary envelopment of virions in the perinuclear space, probably by interacting with two nuclear egress proteins ORF24 and ORF27. This chain is Tegument protein UL47 homolog, found in Varicella-zoster virus (strain Oka vaccine) (HHV-3).